Reading from the N-terminus, the 130-residue chain is Glycine cleavage system H protein (130 aa).

The region spanning 25–107 (IATIGITEFA…YGEGWFLKVR (83 aa)) is the Lipoyl-binding domain. An N6-lipoyllysine modification is found at Lys-66.

The protein belongs to the GcvH family. As to quaternary structure, the glycine cleavage system is composed of four proteins: P, T, L and H. It depends on (R)-lipoate as a cofactor.

In terms of biological role, the glycine cleavage system catalyzes the degradation of glycine. The H protein shuttles the methylamine group of glycine from the P protein to the T protein. In Trichormus variabilis (strain ATCC 29413 / PCC 7937) (Anabaena variabilis), this protein is Glycine cleavage system H protein.